We begin with the raw amino-acid sequence, 232 residues long: Large ribosomal subunit protein uL1 (232 aa).

It belongs to the universal ribosomal protein uL1 family. In terms of assembly, part of the 50S ribosomal subunit.

Binds directly to 23S rRNA. The L1 stalk is quite mobile in the ribosome, and is involved in E site tRNA release. Functionally, protein L1 is also a translational repressor protein, it controls the translation of the L11 operon by binding to its mRNA. The chain is Large ribosomal subunit protein uL1 from Thermosipho melanesiensis (strain DSM 12029 / CIP 104789 / BI429).